The sequence spans 119 residues: Large ribosomal subunit protein uL24 (119 aa).

This sequence belongs to the universal ribosomal protein uL24 family. As to quaternary structure, part of the 50S ribosomal subunit.

In terms of biological role, one of two assembly initiator proteins, it binds directly to the 5'-end of the 23S rRNA, where it nucleates assembly of the 50S subunit. Its function is as follows. One of the proteins that surrounds the polypeptide exit tunnel on the outside of the subunit. The chain is Large ribosomal subunit protein uL24 from Paenarthrobacter aurescens (strain TC1).